Consider the following 159-residue polypeptide: MNPKIEDSEFNWENEDIVMKLVDEKGKAHPVSKAELLESLESRKLGLETRVLDKYHENHVAFENVLVLDAPQDLETIVNLLLPWYMGKTLTLFEGPLNYPDSSRLAQIISKHNVDIVLGSDYNYSIPNPEYLKLFPVPSLKLVDLPNFESISNYLTISR.

This is an uncharacterized protein from Caenorhabditis elegans.